The sequence spans 372 residues: General transcription factor IIH subunit 3 (372 aa).

The disordered stretch occupies residues 40 to 78 (ISGMNDDNDSSSRYNGSTTIGNNNNNNNNNNSNNNNNVN). Residues 50-60 (SSRYNGSTTIG) show a composition bias toward polar residues. Low complexity predominate over residues 61–78 (NNNNNNNNNNSNNNNNVN). A C4-type zinc finger spans residues 323 to 340 (CSVCLSIFCGHSSSCSTC).

Belongs to the TFB4 family. In terms of assembly, component of the 7-subunit TFIIH core complex composed of XPB/repB, XPD/repD, gtf2h1, gtf2h2, gtf2h3, gtf2h4 and gtf2h5, which is active in NER. The core complex associates with the 3-subunit CDK-activating kinase (CAK) module composed of cycH/cyclin H, cdk7 and mnat1 to form the 10-subunit holoenzyme (holo-TFIIH) active in transcription.

The protein resides in the nucleus. Its function is as follows. Component of the general transcription and DNA repair factor IIH (TFIIH) core complex, which is involved in general and transcription-coupled nucleotide excision repair (NER) of damaged DNA and, when complexed to CAK, in RNA transcription by RNA polymerase II. In NER, TFIIH acts by opening DNA around the lesion to allow the excision of the damaged oligonucleotide and its replacement by a new DNA fragment. In transcription, TFIIH has an essential role in transcription initiation. When the pre-initiation complex (PIC) has been established, TFIIH is required for promoter opening and promoter escape. Phosphorylation of the C-terminal tail (CTD) of the largest subunit of RNA polymerase II by the kinase module CAK controls the initiation of transcription. The sequence is that of General transcription factor IIH subunit 3 (gtf2h3) from Dictyostelium discoideum (Social amoeba).